A 455-amino-acid polypeptide reads, in one-letter code: Bifunctional protein GlmU (455 aa).

Positions 1 to 225 are pyrophosphorylase; sequence MNIVILAAGL…EWETLGVNSK (225 aa). UDP-N-acetyl-alpha-D-glucosamine-binding positions include 6–9, lysine 20, glutamine 71, 76–77, 98–100, glycine 135, glutamate 150, asparagine 165, and asparagine 223; these read LAAG, GT, and YGD. Position 100 (aspartate 100) interacts with Mg(2+). A Mg(2+)-binding site is contributed by asparagine 223. Positions 226 to 246 are linker; that stretch reads VQLAELERIHQRNLAQQLLED. Positions 247-455 are N-acetyltransferase; it reads GVTLIDPARI…QRPVKQKKDA (209 aa). The UDP-N-acetyl-alpha-D-glucosamine site is built by arginine 329 and lysine 347. Histidine 359 (proton acceptor) is an active-site residue. UDP-N-acetyl-alpha-D-glucosamine-binding residues include tyrosine 362 and asparagine 373. Acetyl-CoA contacts are provided by residues alanine 376, 382-383, serine 401, alanine 419, and arginine 436; that span reads NY.

It in the N-terminal section; belongs to the N-acetylglucosamine-1-phosphate uridyltransferase family. In the C-terminal section; belongs to the transferase hexapeptide repeat family. Homotrimer. Requires Mg(2+) as cofactor.

It is found in the cytoplasm. The catalysed reaction is alpha-D-glucosamine 1-phosphate + acetyl-CoA = N-acetyl-alpha-D-glucosamine 1-phosphate + CoA + H(+). The enzyme catalyses N-acetyl-alpha-D-glucosamine 1-phosphate + UTP + H(+) = UDP-N-acetyl-alpha-D-glucosamine + diphosphate. It participates in nucleotide-sugar biosynthesis; UDP-N-acetyl-alpha-D-glucosamine biosynthesis; N-acetyl-alpha-D-glucosamine 1-phosphate from alpha-D-glucosamine 6-phosphate (route II): step 2/2. The protein operates within nucleotide-sugar biosynthesis; UDP-N-acetyl-alpha-D-glucosamine biosynthesis; UDP-N-acetyl-alpha-D-glucosamine from N-acetyl-alpha-D-glucosamine 1-phosphate: step 1/1. Its pathway is bacterial outer membrane biogenesis; LPS lipid A biosynthesis. In terms of biological role, catalyzes the last two sequential reactions in the de novo biosynthetic pathway for UDP-N-acetylglucosamine (UDP-GlcNAc). The C-terminal domain catalyzes the transfer of acetyl group from acetyl coenzyme A to glucosamine-1-phosphate (GlcN-1-P) to produce N-acetylglucosamine-1-phosphate (GlcNAc-1-P), which is converted into UDP-GlcNAc by the transfer of uridine 5-monophosphate (from uridine 5-triphosphate), a reaction catalyzed by the N-terminal domain. This is Bifunctional protein GlmU from Ralstonia nicotianae (strain ATCC BAA-1114 / GMI1000) (Ralstonia solanacearum).